We begin with the raw amino-acid sequence, 242 residues long: MLPCSLFLPKHISTSLVFLRSARHGFALLPRWVPRLSSDYPPAAPIRLLAAAASSRRPADGAGAPSRVRQNFHPDSEAAINRQINLELYASYVYLSMAYYFSRDDVALHNFARYFLRLSREEAEHAEKLMRLQNQRGGLICLQDIKKPDQNDWKSGLNAMECALLLEKNVNQSLLELHTLASDKGDPHLCDFLETHYLNEQVKSIKELGDHVNNLVKMGAPESGLAEYLFDKHTLGNENNHN.

Residues 1–49 (MLPCSLFLPKHISTSLVFLRSARHGFALLPRWVPRLSSDYPPAAPIRLL) constitute a mitochondrion transit peptide. Positions 70–219 (QNFHPDSEAA…DHVNNLVKMG (150 aa)) constitute a Ferritin-like diiron domain. Fe cation contacts are provided by glutamate 87, glutamate 122, histidine 125, glutamate 167, and glutamine 201.

This sequence belongs to the ferritin family. As to quaternary structure, homooligomer of 24 subunits. The functional molecule is roughly spherical and contains a central cavity into which the polymeric mineral iron core is deposited.

The protein resides in the mitochondrion. The catalysed reaction is 4 Fe(2+) + O2 + 4 H(+) = 4 Fe(3+) + 2 H2O. Catalyzes the oxidation of ferrous iron(II) to ferric iron(III) and stores iron in a soluble, non-toxic, readily available form. Important for iron homeostasis. Iron is taken up in the ferrous form and deposited as ferric hydroxides after oxidation. The polypeptide is Ferritin, mitochondrial (Bos taurus (Bovine)).